Consider the following 49-residue polypeptide: Large ribosomal subunit protein bL33 (49 aa).

Belongs to the bacterial ribosomal protein bL33 family.

The protein is Large ribosomal subunit protein bL33 of Clostridium botulinum (strain ATCC 19397 / Type A).